A 332-amino-acid chain; its full sequence is Ferrochelatase (332 aa).

Positions 201 and 283 each coordinate Fe cation.

Belongs to the ferrochelatase family.

It is found in the cytoplasm. It carries out the reaction heme b + 2 H(+) = protoporphyrin IX + Fe(2+). It functions in the pathway porphyrin-containing compound metabolism; protoheme biosynthesis; protoheme from protoporphyrin-IX: step 1/1. Functionally, catalyzes the ferrous insertion into protoporphyrin IX. In Francisella tularensis subsp. holarctica (strain FTNF002-00 / FTA), this protein is Ferrochelatase.